The sequence spans 140 residues: Large ribosomal subunit protein uL14 (140 aa).

It belongs to the universal ribosomal protein uL14 family.

This Brugia malayi (Filarial nematode worm) protein is Large ribosomal subunit protein uL14 (RPL23).